The following is a 106-amino-acid chain: Urease subunit beta (106 aa).

It belongs to the urease beta subunit family. In terms of assembly, heterotrimer of UreA (gamma), UreB (beta) and UreC (alpha) subunits. Three heterotrimers associate to form the active enzyme.

It localises to the cytoplasm. It carries out the reaction urea + 2 H2O + H(+) = hydrogencarbonate + 2 NH4(+). It functions in the pathway nitrogen metabolism; urea degradation; CO(2) and NH(3) from urea (urease route): step 1/1. In Prochlorococcus marinus (strain MIT 9301), this protein is Urease subunit beta.